The chain runs to 417 residues: Odorant receptor Or1 (417 aa).

Topologically, residues 1–2 (MK) are cytoplasmic. Residues 3–23 (LNKLNPRWDAYDRRDSFWLQL) form a helical membrane-spanning segment. The Extracellular segment spans residues 24-45 (LCLKYLGLWPPEDTDQATRNRY). The chain crosses the membrane as a helical span at residues 46–66 (IAYGWALRIMFLHLYALTQAL). At 67–73 (YFKDVKD) the chain is on the cytoplasmic side. The chain crosses the membrane as a helical span at residues 74–94 (INDIANALFVLMTQVTLIYKL). Topologically, residues 95–133 (EKFNYNIARIQACLRKLNCTLYHPKQREEFSPVLQSMSG) are extracellular. Asn112 carries an N-linked (GlcNAc...) asparagine glycan. The chain crosses the membrane as a helical span at residues 134 to 154 (VFWLMIFLMFVAIFTIIMWVM). Topologically, residues 155–178 (SPAFDNERRLPVPAWFPVDYHHSD) are cytoplasmic. The chain crosses the membrane as a helical span at residues 179-199 (IVYGVLFLYQTIGIVMSATYN). The Extracellular segment spans residues 200 to 284 (FSTDTMFSGL…ILSFGDEVQD (85 aa)). The helical transmembrane segment at 285 to 305 (IFQGSIFAQVCASVIIICMTL) threads the bilayer. Residues 306-317 (LQATGDDVTMAD) lie on the Cytoplasmic side of the membrane. Residues 318–338 (LLGCGFYLLVMTSQVFIFCYV) traverse the membrane as a helical segment. At 339-417 (GNEISYTTDK…LAVLQSMESE (79 aa)) the chain is on the extracellular side.

It belongs to the insect chemoreceptor superfamily. Heteromeric odorant receptor channel (TC 1.A.69) family. Or2a subfamily. In terms of tissue distribution, female-specific antennae and maxillary palp expression.

The protein localises to the cell membrane. Functionally, odorant receptor which plays a critical role in the anthropophilic host-seeking behavior; establishes the host preference to transmit malaria. May participate in the phenomenon of decreased host-seeking behavior in disease vector mosquitoes after blood feeding. This is Odorant receptor Or1 (OR1) from Anopheles gambiae (African malaria mosquito).